A 379-amino-acid polypeptide reads, in one-letter code: Guanine nucleotide-binding protein G(s) subunit alpha (379 aa).

Residues 1–29 (MGCFGSAGAKGDAEENKKRKEANKNINKQ) form a disordered region. A lipid anchor (N-palmitoyl glycine) is attached at glycine 2. A lipid anchor (S-palmitoyl cysteine) is attached at cysteine 3. The G-alpha domain occupies 39-379 (ATHRLLLLGA…RMHLRQYELL (341 aa)). The segment at 42–55 (RLLLLGAGESGKST) is G1 motif. GTP is bound by residues 47–54 (GAGESGKS), 183–189 (LRCRVLT), 208–212 (DVGGQ), 277–280 (NKQD), and alanine 351. Serine 54 and threonine 189 together coordinate Mg(2+). Positions 181–189 (DILRCRVLT) are G2 motif. The tract at residues 204–213 (FHMFDVGGQR) is G3 motif. Residues 273-280 (ILFLNKQD) are G4 motif. Residues 349–354 (TCAVDT) form a G5 motif region.

It belongs to the G-alpha family. G(s) subfamily. G proteins are composed of 3 units; alpha, beta and gamma. The alpha chain contains the guanine nucleotide binding site.

Its function is as follows. Guanine nucleotide-binding proteins (G proteins) are involved as modulators or transducers in various transmembrane signaling systems. The G(s) protein is involved in hormonal regulation of adenylate cyclase: it activates the cyclase in response to beta-adrenergic stimuli. The polypeptide is Guanine nucleotide-binding protein G(s) subunit alpha (Homarus americanus (American lobster)).